A 323-amino-acid chain; its full sequence is 4-hydroxythreonine-4-phosphate dehydrogenase (323 aa).

Residue Thr133 coordinates substrate. A divalent metal cation-binding residues include His161, His206, and His261. Substrate is bound by residues Lys269, Asn278, and Arg287.

It belongs to the PdxA family. As to quaternary structure, homodimer. Zn(2+) serves as cofactor. Requires Mg(2+) as cofactor. It depends on Co(2+) as a cofactor.

Its subcellular location is the cytoplasm. The enzyme catalyses 4-(phosphooxy)-L-threonine + NAD(+) = 3-amino-2-oxopropyl phosphate + CO2 + NADH. It participates in cofactor biosynthesis; pyridoxine 5'-phosphate biosynthesis; pyridoxine 5'-phosphate from D-erythrose 4-phosphate: step 4/5. Catalyzes the NAD(P)-dependent oxidation of 4-(phosphooxy)-L-threonine (HTP) into 2-amino-3-oxo-4-(phosphooxy)butyric acid which spontaneously decarboxylates to form 3-amino-2-oxopropyl phosphate (AHAP). In Xanthomonas axonopodis pv. citri (strain 306), this protein is 4-hydroxythreonine-4-phosphate dehydrogenase.